A 251-amino-acid chain; its full sequence is Probable phosphatase Sputw3181_2734 (251 aa).

Zn(2+)-binding residues include His8, His10, His16, His41, Glu74, His102, His132, Asp193, and His195.

This sequence belongs to the PHP family. Requires Zn(2+) as cofactor.

In Shewanella sp. (strain W3-18-1), this protein is Probable phosphatase Sputw3181_2734.